The following is a 366-amino-acid chain: Phospho-N-acetylmuramoyl-pentapeptide-transferase (366 aa).

The next 10 membrane-spanning stretches (helical) occupy residues 3 to 23 (QIII…PILI), 55 to 75 (IAII…SYFA), 80 to 100 (FTAS…TGFA), 118 to 138 (AKLI…LRFP), 161 to 181 (IAFG…YVVV), 197 to 217 (LAAG…FWQF), 238 to 258 (IAVL…WNAA), 262 to 282 (IFMG…ISVV), 290 to 310 (VIIG…IAVF), and 341 to 361 (FWLI…GDWL).

The protein belongs to the glycosyltransferase 4 family. MraY subfamily. Mg(2+) is required as a cofactor.

The protein resides in the cell membrane. The enzyme catalyses UDP-N-acetyl-alpha-D-muramoyl-L-alanyl-gamma-D-glutamyl-meso-2,6-diaminopimeloyl-D-alanyl-D-alanine + di-trans,octa-cis-undecaprenyl phosphate = di-trans,octa-cis-undecaprenyl diphospho-N-acetyl-alpha-D-muramoyl-L-alanyl-D-glutamyl-meso-2,6-diaminopimeloyl-D-alanyl-D-alanine + UMP. The protein operates within cell wall biogenesis; peptidoglycan biosynthesis. Its function is as follows. Catalyzes the initial step of the lipid cycle reactions in the biosynthesis of the cell wall peptidoglycan: transfers peptidoglycan precursor phospho-MurNAc-pentapeptide from UDP-MurNAc-pentapeptide onto the lipid carrier undecaprenyl phosphate, yielding undecaprenyl-pyrophosphoryl-MurNAc-pentapeptide, known as lipid I. The protein is Phospho-N-acetylmuramoyl-pentapeptide-transferase of Corynebacterium efficiens (strain DSM 44549 / YS-314 / AJ 12310 / JCM 11189 / NBRC 100395).